The chain runs to 140 residues: Nuclear receptor 2C2-associated protein (140 aa).

The protein belongs to the NR2C2AP family. In terms of assembly, interacts with NR2C2/TR4.

Its subcellular location is the nucleus. Functionally, may act as a repressor of NR2C2-mediated transactivation by suppressing the binding between NR2C2/TR4 and the TR4-response element in target genes. This Mus musculus (Mouse) protein is Nuclear receptor 2C2-associated protein (Nr2c2ap).